Here is an 853-residue protein sequence, read N- to C-terminus: ATP-dependent zinc metalloprotease FtsH (853 aa).

Residues 1–5 lie on the Cytoplasmic side of the membrane; it reads MKNKK. Residues 6–26 traverse the membrane as a helical segment; the sequence is YLQFGGIAAVILIVLFLVSLF. Residues 27–113 are Extracellular-facing; the sequence is SSDTRNFQEV…SYTTNVTQES (87 aa). The chain crosses the membrane as a helical span at residues 114 to 134; that stretch reads FLMSMLSFILPMVIIFGLLMF. Topologically, residues 135–853 are cytoplasmic; that stretch reads FLTRMQGGGM…NPENEGDNRG (719 aa). 205–212 lines the ATP pocket; sequence GPPGTGKT. His-427 is a Zn(2+) binding site. Glu-428 is a catalytic residue. Residues His-431 and Asp-503 each coordinate Zn(2+). Basic and acidic residues-rich tracts occupy residues 619–632 and 639–648; these read ESTRFPRQENREPV and ALERGEEPPK. Positions 619 to 853 are disordered; sequence ESTRFPRQEN…NPENEGDNRG (235 aa). Over residues 677–695 the composition is skewed to low complexity; sequence PASSAGVAPAAGAAAGSYG. Composition is skewed to polar residues over residues 728–739 and 770–788; these read TPAQAPEQSPDS and MDQSTGAEHTPGNVSQESP. The segment covering 796 to 813 has biased composition (basic and acidic residues); the sequence is LPDHERSDYPEKAQKESV.

It in the central section; belongs to the AAA ATPase family. This sequence in the C-terminal section; belongs to the peptidase M41 family. In terms of assembly, homohexamer. Requires Zn(2+) as cofactor.

It localises to the cell membrane. Acts as a processive, ATP-dependent zinc metallopeptidase for both cytoplasmic and membrane proteins. Plays a role in the quality control of integral membrane proteins. This Corynebacterium glutamicum (strain ATCC 13032 / DSM 20300 / JCM 1318 / BCRC 11384 / CCUG 27702 / LMG 3730 / NBRC 12168 / NCIMB 10025 / NRRL B-2784 / 534) protein is ATP-dependent zinc metalloprotease FtsH.